Reading from the N-terminus, the 463-residue chain is L-seryl-tRNA(Sec) selenium transferase (463 aa).

N6-(pyridoxal phosphate)lysine is present on lysine 295.

This sequence belongs to the SelA family. As to quaternary structure, homodecamer; pentamer of dimers. Binds only one seryl-tRNA(Sec) per dimer. Pyridoxal 5'-phosphate serves as cofactor.

The protein localises to the cytoplasm. It carries out the reaction L-seryl-tRNA(Sec) + selenophosphate + H(+) = L-selenocysteinyl-tRNA(Sec) + phosphate. It participates in aminoacyl-tRNA biosynthesis; selenocysteinyl-tRNA(Sec) biosynthesis; selenocysteinyl-tRNA(Sec) from L-seryl-tRNA(Sec) (bacterial route): step 1/1. Converts seryl-tRNA(Sec) to selenocysteinyl-tRNA(Sec) required for selenoprotein biosynthesis. The protein is L-seryl-tRNA(Sec) selenium transferase of Escherichia coli O6:H1 (strain CFT073 / ATCC 700928 / UPEC).